The primary structure comprises 666 residues: Mitogen-activated protein kinase kinase kinase ANP1 (666 aa).

The 263-residue stretch at 69-331 (WRKGQLIGRG…ASELLKHPFV (263 aa)) folds into the Protein kinase domain. ATP contacts are provided by residues 75–83 (IGRGAFGTV) and Lys98. Residues 101-131 (LIAANFASKEKTQAHIQELEEEVKLLKNLSH) adopt a coiled-coil conformation. Residues Lys109 and Lys111 each participate in a glycyl lysine isopeptide (Lys-Gly) (interchain with G-Cter in ubiquitin) cross-link. Residue Asp197 is the Proton acceptor of the active site. Positions 452–464 (KFDESPGNGEKES) are enriched in basic and acidic residues. Disordered regions lie at residues 452 to 481 (KFDE…DDDE), 536 to 592 (GFLK…DGVS), and 635 to 666 (QEIM…SPGK). The segment covering 538–558 (LKLPPKSRSPSRGPLGGSPSR) has biased composition (low complexity). Residues 560-569 (TDATSCSKSP) are compositionally biased toward polar residues. Residues 620–643 (KKWKEELDQELERKRQEIMRQAGL) adopt a coiled-coil conformation. Positions 647-660 (PRDRGMSRQREKSR) are enriched in basic and acidic residues.

It belongs to the protein kinase superfamily. STE Ser/Thr protein kinase family. MAP kinase kinase kinase subfamily. As to expression, expressed in roots, inflorescence stems, flower buds and flowers. Low amount in rosette and cauline leaves.

It carries out the reaction L-seryl-[protein] + ATP = O-phospho-L-seryl-[protein] + ADP + H(+). The catalysed reaction is L-threonyl-[protein] + ATP = O-phospho-L-threonyl-[protein] + ADP + H(+). May be involved in an oxidative stress-mediated signaling cascade that phosphorylates downstream MAP kinases MPK3 and MPK6. May suppress auxin signaling that promotes cell cycle. Functionally redundant to ANP2 and ANP3 in the positive regulation of cytokinesis. The polypeptide is Mitogen-activated protein kinase kinase kinase ANP1 (ANP1) (Arabidopsis thaliana (Mouse-ear cress)).